The primary structure comprises 1401 residues: Kinesin-like protein KIF27 (1401 aa).

The 337-residue stretch at 5–341 (PVKVAVRIRP…LKYANRARNI (337 aa)) folds into the Kinesin motor domain. 84–91 (GQTGSGKT) is an ATP binding site. Coiled-coil stretches lie at residues 352–413 (ESDR…GYQC) and 489–557 (LAAD…KLNL). 5 positions are modified to phosphoserine: Ser643, Ser646, Ser672, Ser675, and Ser704. The tract at residues 643-662 (SDNSDDEESEGQEKSGTRCR) is disordered. 4 coiled-coil regions span residues 705 to 886 (QELN…IQLK), 916 to 1070 (DHLQ…AAIE), 1118 to 1154 (NKVVNLREAERKQQLYNEEMKMKVLERDNMVRELESA), and 1190 to 1219 (EGIMETFKTYEDKIQQLEKDLYFYKKTSRD). Residue Ser999 is modified to Phosphoserine. The segment covering 1259–1280 (EELKWASRPESMKLSGREREMD) has biased composition (basic and acidic residues). Positions 1259–1332 (EELKWASRPE…TETDDNQFTK (74 aa)) are disordered. Polar residues predominate over residues 1281–1292 (SSASSLRTQPNP). A phosphoserine mark is found at Ser1367 and Ser1389.

It belongs to the TRAFAC class myosin-kinesin ATPase superfamily. Kinesin family. KIF27 subfamily. As to quaternary structure, interacts with STK36. Testis, pancreatic islet, germ cell tumors and Jurkat T-cells.

It is found in the cytoplasm. Its subcellular location is the cytoskeleton. The protein localises to the cell projection. It localises to the cilium. In terms of biological role, plays an essential role in motile ciliogenesis. The protein is Kinesin-like protein KIF27 (KIF27) of Homo sapiens (Human).